Consider the following 257-residue polypeptide: Deoxyribose-phosphate aldolase (257 aa).

Asp-102 serves as the catalytic Proton donor/acceptor. Lys-166 serves as the catalytic Schiff-base intermediate with acetaldehyde. The Proton donor/acceptor role is filled by Lys-198.

It belongs to the DeoC/FbaB aldolase family. DeoC type 2 subfamily.

The protein resides in the cytoplasm. It carries out the reaction 2-deoxy-D-ribose 5-phosphate = D-glyceraldehyde 3-phosphate + acetaldehyde. The protein operates within carbohydrate degradation; 2-deoxy-D-ribose 1-phosphate degradation; D-glyceraldehyde 3-phosphate and acetaldehyde from 2-deoxy-alpha-D-ribose 1-phosphate: step 2/2. Functionally, catalyzes a reversible aldol reaction between acetaldehyde and D-glyceraldehyde 3-phosphate to generate 2-deoxy-D-ribose 5-phosphate. The chain is Deoxyribose-phosphate aldolase from Shewanella halifaxensis (strain HAW-EB4).